The chain runs to 388 residues: Leucine aminopeptidase 1 (388 aa).

An N-terminal signal peptide occupies residues 1-19; it reads MKLPALLILGVAASTMVLA. The propeptide occupies 20–88; the sequence is AIAPDQVPLN…LPKVFPTPAV (69 aa). Asparagine 96, asparagine 119, asparagine 149, asparagine 164, and asparagine 181 each carry an N-linked (GlcNAc...) asparagine glycan. Positions 189 and 207 each coordinate Zn(2+). The N-linked (GlcNAc...) asparagine glycan is linked to asparagine 232. Zn(2+) is bound by residues glutamate 246 and aspartate 273. A disulfide bridge links cysteine 322 with cysteine 326. Histidine 355 provides a ligand contact to Zn(2+).

Belongs to the peptidase M28 family. M28E subfamily. As to quaternary structure, monomer. The cofactor is Zn(2+).

The protein resides in the secreted. Its function is as follows. Extracellular aminopeptidase that allows assimilation of proteinaceous substrates. This is Leucine aminopeptidase 1 (LAP1) from Paracoccidioides brasiliensis (strain Pb03).